We begin with the raw amino-acid sequence, 76 residues long: Translational regulator CsrA (76 aa).

The protein belongs to the CsrA/RsmA family. Homodimer; the beta-strands of each monomer intercalate to form a hydrophobic core, while the alpha-helices form wings that extend away from the core.

It localises to the cytoplasm. Its function is as follows. A translational regulator that binds mRNA to regulate translation initiation and/or mRNA stability. Usually binds in the 5'-UTR at or near the Shine-Dalgarno sequence preventing ribosome-binding, thus repressing translation. Its main target seems to be the major flagellin gene, while its function is anatagonized by FliW. This Wolinella succinogenes (strain ATCC 29543 / DSM 1740 / CCUG 13145 / JCM 31913 / LMG 7466 / NCTC 11488 / FDC 602W) (Vibrio succinogenes) protein is Translational regulator CsrA.